We begin with the raw amino-acid sequence, 353 residues long: Thiamine-phosphate synthase (353 aa).

Residues 1-128 (MESMPVAPST…ARTAAAVRYA (128 aa)) form a unknown region. The segment at 129–353 (LYDHEVRILE…ASRQLLDLLT (225 aa)) is thiamine-phosphate synthase. 4-amino-2-methyl-5-(diphosphooxymethyl)pyrimidine-binding positions include 185–189 (QYRRK) and N217. Mg(2+) is bound by residues D218 and D237. 4-amino-2-methyl-5-(diphosphooxymethyl)pyrimidine is bound at residue S256. 282 to 284 (TAT) is a binding site for 2-[(2R,5Z)-2-carboxy-4-methylthiazol-5(2H)-ylidene]ethyl phosphate. Residue K285 coordinates 4-amino-2-methyl-5-(diphosphooxymethyl)pyrimidine. 2-[(2R,5Z)-2-carboxy-4-methylthiazol-5(2H)-ylidene]ethyl phosphate-binding positions include G312 and 332-333 (VS).

This sequence belongs to the thiamine-phosphate synthase family. The cofactor is Mg(2+).

It catalyses the reaction 2-[(2R,5Z)-2-carboxy-4-methylthiazol-5(2H)-ylidene]ethyl phosphate + 4-amino-2-methyl-5-(diphosphooxymethyl)pyrimidine + 2 H(+) = thiamine phosphate + CO2 + diphosphate. The catalysed reaction is 2-(2-carboxy-4-methylthiazol-5-yl)ethyl phosphate + 4-amino-2-methyl-5-(diphosphooxymethyl)pyrimidine + 2 H(+) = thiamine phosphate + CO2 + diphosphate. The enzyme catalyses 4-methyl-5-(2-phosphooxyethyl)-thiazole + 4-amino-2-methyl-5-(diphosphooxymethyl)pyrimidine + H(+) = thiamine phosphate + diphosphate. The protein operates within cofactor biosynthesis; thiamine diphosphate biosynthesis; thiamine phosphate from 4-amino-2-methyl-5-diphosphomethylpyrimidine and 4-methyl-5-(2-phosphoethyl)-thiazole: step 1/1. Functionally, condenses 4-methyl-5-(beta-hydroxyethyl)thiazole monophosphate (THZ-P) and 2-methyl-4-amino-5-hydroxymethyl pyrimidine pyrophosphate (HMP-PP) to form thiamine monophosphate (TMP). In Synechococcus sp. (strain WH7803), this protein is Thiamine-phosphate synthase.